Reading from the N-terminus, the 916-residue chain is Beta-scruin (916 aa).

Kelch repeat units follow at residues 82–133 (AVLI…YFHG), 134–187 (KVYL…IMDE), 188–235 (RIFV…NNEG), 237–289 (IYVV…TQNK), 291–341 (IWIW…KAGT), and 342–390 (QVFI…GIPV). Residues 393 to 426 (SPASDITTSKTTRSGSRKTQKTLKDKQQSDIHAR) are disordered. Over residues 414–425 (TLKDKQQSDIHA) the composition is skewed to basic and acidic residues. Kelch repeat units lie at residues 586 to 637 (VIIA…YYRG), 638 to 691 (AIYV…VFND), 692 to 739 (SIYV…SHGG), 741 to 793 (LWVM…VCDD), 795 to 847 (IWLC…ALES), and 849 to 896 (LYLI…TIPP).

In terms of tissue distribution, sperm.

In terms of biological role, may have an enzymatic role. Found the acrosomal vesicle at the anterior of sperm but not in the acrosomal process. The polypeptide is Beta-scruin (Limulus polyphemus (Atlantic horseshoe crab)).